Reading from the N-terminus, the 1343-residue chain is uncharacterized protein (1343 aa).

Residues 432-449 form a helical membrane-spanning segment; sequence LYVYFVTTKTGVVAFSLL.

Belongs to the IIV-6 295L family.

The protein resides in the membrane. This is an uncharacterized protein from Acheta domesticus (House cricket).